The chain runs to 447 residues: Trigger factor (447 aa).

One can recognise a PPIase FKBP-type domain in the interval 174-261 (GDIAVLGFKG…LKDLKTRELP (88 aa)).

It belongs to the FKBP-type PPIase family. Tig subfamily.

Its subcellular location is the cytoplasm. The catalysed reaction is [protein]-peptidylproline (omega=180) = [protein]-peptidylproline (omega=0). Functionally, involved in protein export. Acts as a chaperone by maintaining the newly synthesized protein in an open conformation. Functions as a peptidyl-prolyl cis-trans isomerase. The chain is Trigger factor from Synechococcus sp. (strain CC9902).